We begin with the raw amino-acid sequence, 906 residues long: Protein translocase subunit SecA (906 aa).

ATP is bound by residues Q86, 104-108, and D511; that span reads GEGKT. Basic and acidic residues-rich tracts occupy residues 853-865 and 877-888; these read HESV…RHDE and VRREGPKVKRND. Positions 853-906 are disordered; it reads HESVIDNNQRHDEDEQEETPKVQQVRREGPKVKRNDPCPCGSGKKYKQCHGKVE. Zn(2+) is bound by residues C890, C892, C901, and H902. The segment covering 896–906 has biased composition (basic residues); the sequence is KKYKQCHGKVE.

Belongs to the SecA family. As to quaternary structure, monomer and homodimer. Part of the essential Sec protein translocation apparatus which comprises SecA, SecYEG and auxiliary proteins SecDF-YajC and YidC. Zn(2+) serves as cofactor.

It localises to the cell inner membrane. The protein resides in the cytoplasm. The catalysed reaction is ATP + H2O + cellular proteinSide 1 = ADP + phosphate + cellular proteinSide 2.. Functionally, part of the Sec protein translocase complex. Interacts with the SecYEG preprotein conducting channel. Has a central role in coupling the hydrolysis of ATP to the transfer of proteins into and across the cell membrane, serving both as a receptor for the preprotein-SecB complex and as an ATP-driven molecular motor driving the stepwise translocation of polypeptide chains across the membrane. This chain is Protein translocase subunit SecA, found in Francisella tularensis subsp. novicida (strain U112).